The chain runs to 415 residues: Glutamyl-tRNA reductase (415 aa).

Residues 49 to 52 (TCNR), Ser-104, 109 to 111 (EPQ), and Gln-115 each bind substrate. Cys-50 functions as the Nucleophile in the catalytic mechanism. 184 to 189 (GAGEMI) provides a ligand contact to NADP(+).

Belongs to the glutamyl-tRNA reductase family. Homodimer.

It carries out the reaction (S)-4-amino-5-oxopentanoate + tRNA(Glu) + NADP(+) = L-glutamyl-tRNA(Glu) + NADPH + H(+). The protein operates within porphyrin-containing compound metabolism; protoporphyrin-IX biosynthesis; 5-aminolevulinate from L-glutamyl-tRNA(Glu): step 1/2. Catalyzes the NADPH-dependent reduction of glutamyl-tRNA(Glu) to glutamate 1-semialdehyde (GSA). The sequence is that of Glutamyl-tRNA reductase from Neisseria meningitidis serogroup C (strain 053442).